The following is a 136-amino-acid chain: Large ribosomal subunit protein uL16c (136 aa).

This sequence belongs to the universal ribosomal protein uL16 family. As to quaternary structure, part of the 50S ribosomal subunit.

It is found in the plastid. Its subcellular location is the chloroplast. This Mesostigma viride (Green alga) protein is Large ribosomal subunit protein uL16c.